We begin with the raw amino-acid sequence, 214 residues long: Probable nicotinate-nucleotide adenylyltransferase (214 aa).

It belongs to the NadD family.

The enzyme catalyses nicotinate beta-D-ribonucleotide + ATP + H(+) = deamido-NAD(+) + diphosphate. It functions in the pathway cofactor biosynthesis; NAD(+) biosynthesis; deamido-NAD(+) from nicotinate D-ribonucleotide: step 1/1. Its function is as follows. Catalyzes the reversible adenylation of nicotinate mononucleotide (NaMN) to nicotinic acid adenine dinucleotide (NaAD). In Pseudomonas fluorescens (strain ATCC BAA-477 / NRRL B-23932 / Pf-5), this protein is Probable nicotinate-nucleotide adenylyltransferase.